Here is a 339-residue protein sequence, read N- to C-terminus: 3-isopropylmalate dehydrogenase (339 aa).

Substrate contacts are provided by Arg87, Arg97, Arg124, and Asp214. The Mg(2+) site is built by Asp214, Asp238, and Asp242. 274 to 286 contacts NAD(+); sequence GSAPDIAGQGIAD.

This sequence belongs to the isocitrate and isopropylmalate dehydrogenases family. LeuB type 2 subfamily. As to quaternary structure, homodimer. It depends on Mg(2+) as a cofactor. Mn(2+) is required as a cofactor.

The protein localises to the cytoplasm. It carries out the reaction (2R,3S)-3-isopropylmalate + NAD(+) = 4-methyl-2-oxopentanoate + CO2 + NADH. Its pathway is amino-acid biosynthesis; L-leucine biosynthesis; L-leucine from 3-methyl-2-oxobutanoate: step 3/4. Catalyzes the oxidation of 3-carboxy-2-hydroxy-4-methylpentanoate (3-isopropylmalate) to 3-carboxy-4-methyl-2-oxopentanoate. The product decarboxylates to 4-methyl-2 oxopentanoate. This chain is 3-isopropylmalate dehydrogenase, found in Mycobacterium marinum (strain ATCC BAA-535 / M).